The following is a 724-amino-acid chain: 1,4-alpha-glucan branching enzyme GlgB 1 (724 aa).

D403 functions as the Nucleophile in the catalytic mechanism. The active-site Proton donor is the E456.

Belongs to the glycosyl hydrolase 13 family. GlgB subfamily. Monomer.

It catalyses the reaction Transfers a segment of a (1-&gt;4)-alpha-D-glucan chain to a primary hydroxy group in a similar glucan chain.. Its pathway is glycan biosynthesis; glycogen biosynthesis. In terms of biological role, catalyzes the formation of the alpha-1,6-glucosidic linkages in glycogen by scission of a 1,4-alpha-linked oligosaccharide from growing alpha-1,4-glucan chains and the subsequent attachment of the oligosaccharide to the alpha-1,6 position. The chain is 1,4-alpha-glucan branching enzyme GlgB 1 (glgB1) from Xanthomonas axonopodis pv. citri (strain 306).